The following is a 205-amino-acid chain: Holliday junction branch migration complex subunit RuvA (205 aa).

The tract at residues 1–64 is domain I; the sequence is MIGKLKGTID…EDQLKLFGFM (64 aa). The tract at residues 65–143 is domain II; the sequence is SALEREWFNL…AFTGDAGSAI (79 aa). Residues 144 to 153 are flexible linker; that stretch reads GLKQELGEGV. The segment at 153–205 is domain III; sequence VASAPVSDAVSALTNLGYSRDQAANAIAAALKNGGEGADSAKLIRLGLKELSR.

Belongs to the RuvA family. As to quaternary structure, homotetramer. Forms an RuvA(8)-RuvB(12)-Holliday junction (HJ) complex. HJ DNA is sandwiched between 2 RuvA tetramers; dsDNA enters through RuvA and exits via RuvB. An RuvB hexamer assembles on each DNA strand where it exits the tetramer. Each RuvB hexamer is contacted by two RuvA subunits (via domain III) on 2 adjacent RuvB subunits; this complex drives branch migration. In the full resolvosome a probable DNA-RuvA(4)-RuvB(12)-RuvC(2) complex forms which resolves the HJ.

It localises to the cytoplasm. Functionally, the RuvA-RuvB-RuvC complex processes Holliday junction (HJ) DNA during genetic recombination and DNA repair, while the RuvA-RuvB complex plays an important role in the rescue of blocked DNA replication forks via replication fork reversal (RFR). RuvA specifically binds to HJ cruciform DNA, conferring on it an open structure. The RuvB hexamer acts as an ATP-dependent pump, pulling dsDNA into and through the RuvAB complex. HJ branch migration allows RuvC to scan DNA until it finds its consensus sequence, where it cleaves and resolves the cruciform DNA. This is Holliday junction branch migration complex subunit RuvA from Allorhizobium ampelinum (strain ATCC BAA-846 / DSM 112012 / S4) (Agrobacterium vitis (strain S4)).